We begin with the raw amino-acid sequence, 118 residues long: MRAKWLWMTAVGSLLITVLTAWGWAAASSQDSKIVYVFSDSCGYCQTFRPTLETVLQEYPQTSVERLDIREERDLKEALRLGAEATPTIFVVRDGTVMDKLEGDVAEAVLRSFFQKKS.

Residues 1–27 (MRAKWLWMTAVGSLLITVLTAWGWAAA) form the signal peptide. Residues 28 to 114 (SSQDSKIVYV…VAEAVLRSFF (87 aa)) form the Thioredoxin domain. An intrachain disulfide couples Cys-42 to Cys-45.

Belongs to the thioredoxin family.

It is found in the secreted. Functionally, stimulates the oxidation and reduction of disulfide bonds in vitro. In Brevibacillus choshinensis, this protein is Disulfide bond formation protein (bdb).